We begin with the raw amino-acid sequence, 264 residues long: Thymidylate synthase (264 aa).

Arginine 21 contributes to the dUMP binding site. Histidine 51 serves as a coordination point for (6R)-5,10-methylene-5,6,7,8-tetrahydrofolate. 126 to 127 (RR) serves as a coordination point for dUMP. The active-site Nucleophile is the cysteine 146. Residues 166-169 (RSAD), asparagine 177, and 207-209 (HIY) each bind dUMP. Aspartate 169 serves as a coordination point for (6R)-5,10-methylene-5,6,7,8-tetrahydrofolate. Alanine 263 lines the (6R)-5,10-methylene-5,6,7,8-tetrahydrofolate pocket.

The protein belongs to the thymidylate synthase family. Bacterial-type ThyA subfamily. As to quaternary structure, homodimer.

It is found in the cytoplasm. It carries out the reaction dUMP + (6R)-5,10-methylene-5,6,7,8-tetrahydrofolate = 7,8-dihydrofolate + dTMP. It participates in pyrimidine metabolism; dTTP biosynthesis. Catalyzes the reductive methylation of 2'-deoxyuridine-5'-monophosphate (dUMP) to 2'-deoxythymidine-5'-monophosphate (dTMP) while utilizing 5,10-methylenetetrahydrofolate (mTHF) as the methyl donor and reductant in the reaction, yielding dihydrofolate (DHF) as a by-product. This enzymatic reaction provides an intracellular de novo source of dTMP, an essential precursor for DNA biosynthesis. The chain is Thymidylate synthase from Bacteroides fragilis (strain ATCC 25285 / DSM 2151 / CCUG 4856 / JCM 11019 / LMG 10263 / NCTC 9343 / Onslow / VPI 2553 / EN-2).